A 220-amino-acid polypeptide reads, in one-letter code: Uracil-DNA glycosylase (220 aa).

Catalysis depends on Asp65, which acts as the Proton acceptor.

It belongs to the uracil-DNA glycosylase (UDG) superfamily. UNG family.

It is found in the cytoplasm. The enzyme catalyses Hydrolyzes single-stranded DNA or mismatched double-stranded DNA and polynucleotides, releasing free uracil.. In terms of biological role, excises uracil residues from the DNA which can arise as a result of misincorporation of dUMP residues by DNA polymerase or due to deamination of cytosine. The sequence is that of Uracil-DNA glycosylase from Azobacteroides pseudotrichonymphae genomovar. CFP2.